The primary structure comprises 185 residues: uncharacterized protein (185 aa).

This sequence to M.thermoautotrophicum MTH236.

This is an uncharacterized protein from Methanocaldococcus jannaschii (strain ATCC 43067 / DSM 2661 / JAL-1 / JCM 10045 / NBRC 100440) (Methanococcus jannaschii).